The primary structure comprises 744 residues: NAD(P)H-quinone oxidoreductase subunit 5, chloroplastic (744 aa).

A run of 16 helical transmembrane segments spans residues 9 to 29 (WIIPFLPLPVPMLIGLGLFLF), 40 to 60 (WAFQSVLLLSIVMIFSMNLSI), 89 to 109 (IDPLTSIMSILITTVGILVLI), 125 to 145 (FVYMSFFSTSMLGLVTSSNLI), 147 to 167 (IYIFWELVGICSYLLIGFWFT), 185 to 205 (GDFGLLLGILGFYWITGSFEF), 219 to 239 (NEVNFLFVTLCAVLLFAGAIA), 258 to 278 (TPISALIHAATMVAAGIFLVA), 290 to 312 (IMNFISLIGIITVFLGATLALAQ), 327 to 347 (LGYMMLALGMGSYRSALFHLI), 354 to 374 (ALLFLGSGSVIHSMETLVGYC), 396 to 416 (TSFLLGTLSLCGIPPLACFWS), 425 to 445 (WLYSPIFAIIAWSTAGLTAFY), 549 to 569 (LFPILILVLFTLFVGFLGIPF), 608 to 628 (VFSVSISSFGIFIAFFLYKPV), and 724 to 744 (YLFFYFSYVSIFLLIYYFLNF).

This sequence belongs to the complex I subunit 5 family. As to quaternary structure, NDH is composed of at least 16 different subunits, 5 of which are encoded in the nucleus.

It localises to the plastid. The protein localises to the chloroplast thylakoid membrane. It catalyses the reaction a plastoquinone + NADH + (n+1) H(+)(in) = a plastoquinol + NAD(+) + n H(+)(out). The catalysed reaction is a plastoquinone + NADPH + (n+1) H(+)(in) = a plastoquinol + NADP(+) + n H(+)(out). NDH shuttles electrons from NAD(P)H:plastoquinone, via FMN and iron-sulfur (Fe-S) centers, to quinones in the photosynthetic chain and possibly in a chloroplast respiratory chain. The immediate electron acceptor for the enzyme in this species is believed to be plastoquinone. Couples the redox reaction to proton translocation, and thus conserves the redox energy in a proton gradient. The sequence is that of NAD(P)H-quinone oxidoreductase subunit 5, chloroplastic (ndhF) from Mutisia acuminata.